The chain runs to 103 residues: MYAVIKTGGKQYKVAVGEKLKVEQIPADIDAEITLDQVLAVGEGESIQFGTPLVSGASVKATVVSHGRHAKVTIFKMRRRKHYQKHGGHRQNYTELRIDAINA.

This sequence belongs to the bacterial ribosomal protein bL21 family. In terms of assembly, part of the 50S ribosomal subunit. Contacts protein L20.

In terms of biological role, this protein binds to 23S rRNA in the presence of protein L20. This chain is Large ribosomal subunit protein bL21, found in Burkholderia mallei (strain NCTC 10247).